Reading from the N-terminus, the 1418-residue chain is Protein ced-11 (1418 aa).

7 helical membrane-spanning segments follow: residues 617-637, 755-775, 782-802, 818-838, 856-876, 898-918, and 986-1006; these read FPIFLPKWAKICISAVLIIPV, YWLSLLFRIVFICCLAYSVVL, LWDTGMWVWSFFWWIENCFVL, VFDVFAFFVFLILLLVMKVFP, VVSAFFVLYVSYSTLFTYIPL, FLFMIALVMLSSAVAIQAVVF, and IVIEYFVILKLLLWPILFAFF.

It is found in the membrane. Functionally, plays a major role in programmed cell death. The protein is Protein ced-11 (ced-11) of Caenorhabditis elegans.